We begin with the raw amino-acid sequence, 331 residues long: Pantothenate kinase (331 aa).

Residue 109 to 116 participates in ATP binding; sequence GSVAVGKS.

This sequence belongs to the prokaryotic pantothenate kinase family.

It localises to the cytoplasm. It catalyses the reaction (R)-pantothenate + ATP = (R)-4'-phosphopantothenate + ADP + H(+). It functions in the pathway cofactor biosynthesis; coenzyme A biosynthesis; CoA from (R)-pantothenate: step 1/5. The protein is Pantothenate kinase of Sinorhizobium fredii (strain NBRC 101917 / NGR234).